Here is a 327-residue protein sequence, read N- to C-terminus: DNA-directed RNA polymerase subunit alpha (327 aa).

The interval 1 to 233 (MQNSASEFLK…DQLSIFADLQ (233 aa)) is alpha N-terminal domain (alpha-NTD). Positions 247-327 (IDPILLRPVD…NWPPAGLEKP (81 aa)) are alpha C-terminal domain (alpha-CTD).

Belongs to the RNA polymerase alpha chain family. Homodimer. The RNAP catalytic core consists of 2 alpha, 1 beta, 1 beta' and 1 omega subunit. When a sigma factor is associated with the core the holoenzyme is formed, which can initiate transcription.

The enzyme catalyses RNA(n) + a ribonucleoside 5'-triphosphate = RNA(n+1) + diphosphate. In terms of biological role, DNA-dependent RNA polymerase catalyzes the transcription of DNA into RNA using the four ribonucleoside triphosphates as substrates. The chain is DNA-directed RNA polymerase subunit alpha from Chromobacterium violaceum (strain ATCC 12472 / DSM 30191 / JCM 1249 / CCUG 213 / NBRC 12614 / NCIMB 9131 / NCTC 9757 / MK).